The sequence spans 287 residues: Phosphatidylserine decarboxylase proenzyme (287 aa).

Catalysis depends on charge relay system; for autoendoproteolytic cleavage activity residues aspartate 89, histidine 146, and serine 252. The active-site Schiff-base intermediate with substrate; via pyruvic acid; for decarboxylase activity is the serine 252. A Pyruvic acid (Ser); by autocatalysis modification is found at serine 252.

This sequence belongs to the phosphatidylserine decarboxylase family. PSD-B subfamily. Prokaryotic type I sub-subfamily. Heterodimer of a large membrane-associated beta subunit and a small pyruvoyl-containing alpha subunit. Pyruvate serves as cofactor. Post-translationally, is synthesized initially as an inactive proenzyme. Formation of the active enzyme involves a self-maturation process in which the active site pyruvoyl group is generated from an internal serine residue via an autocatalytic post-translational modification. Two non-identical subunits are generated from the proenzyme in this reaction, and the pyruvate is formed at the N-terminus of the alpha chain, which is derived from the carboxyl end of the proenzyme. The autoendoproteolytic cleavage occurs by a canonical serine protease mechanism, in which the side chain hydroxyl group of the serine supplies its oxygen atom to form the C-terminus of the beta chain, while the remainder of the serine residue undergoes an oxidative deamination to produce ammonia and the pyruvoyl prosthetic group on the alpha chain. During this reaction, the Ser that is part of the protease active site of the proenzyme becomes the pyruvoyl prosthetic group, which constitutes an essential element of the active site of the mature decarboxylase.

The protein localises to the cell membrane. The enzyme catalyses a 1,2-diacyl-sn-glycero-3-phospho-L-serine + H(+) = a 1,2-diacyl-sn-glycero-3-phosphoethanolamine + CO2. It participates in phospholipid metabolism; phosphatidylethanolamine biosynthesis; phosphatidylethanolamine from CDP-diacylglycerol: step 2/2. Functionally, catalyzes the formation of phosphatidylethanolamine (PtdEtn) from phosphatidylserine (PtdSer). This chain is Phosphatidylserine decarboxylase proenzyme, found in Shewanella sediminis (strain HAW-EB3).